A 487-amino-acid chain; its full sequence is MPN domain-containing protein (487 aa).

The disordered stretch occupies residues 1–55 (MAAPESLSPGATAEEAPEEDEDDAEAEDPERGTGSGGRSGSLGGSGGGTAGPGMA). Residue Ala2 is modified to N-acetylalanine. At Ser8 the chain carries Phosphoserine. The span at 15-28 (EAPEEDEDDAEAED) shows a compositional bias: acidic residues. Positions 33-55 (TGSGGRSGSLGGSGGGTAGPGMA) are enriched in gly residues. Residues 61–156 (TRRAVTLRVL…KYKAAWLRRH (96 aa)) form the RAMA domain. Residues Ser113, Ser115, and Trp135 each contribute to the DNA site. Residues 163–217 (ATADESPTSEGEEEELLLEEEEEDVLAGVSSEDKGHRPPGKGSLEPEATPPGKRM) form a disordered region. Residues Ser168 and Ser171 each carry the phosphoserine modification. The span at 172-187 (EGEEEELLLEEEEEDV) shows a compositional bias: acidic residues. The region spanning 258 to 393 (VAVSSNVLFL…PESKICPFWV (136 aa)) is the MPN domain. Zn(2+)-binding residues include His335, His337, and Asp348. The short motif at 335-348 (HSHPHSPAVPSLQD) is the JAMM motif element.

This sequence belongs to the peptidase M67 family. In terms of assembly, monomer. Mainly monomoric, but when binds to dsDNA, forms homotetramer assembled into two homodimers. May interact with histones; this interaction is facilitated by. In terms of processing, degraded following binding to N(6)-methyladenosine methylated DNA (m6A).

Functionally, probable protease. Acts as a sensor of N(6)-methyladenosine methylation on DNA (m6A): recognizes and binds m6A DNA, leading to its degradation. Binds only double strand DNA (dsDNA) in a sequence-independent manner. The sequence is that of MPN domain-containing protein from Mus musculus (Mouse).